The sequence spans 643 residues: Rhophilin-1 (643 aa).

The segment at 1 to 43 is disordered; it reads MILEERPDGQGTGEESSRPQDDGSIRKGYGSFVQNQPGQLQSH. Residues 15–25 are compositionally biased toward basic and acidic residues; it reads ESSRPQDDGSI. Residues 30 to 104 enclose the REM-1 domain; the sequence is GSFVQNQPGQ…LAELSTSVDV (75 aa). S31 carries the post-translational modification Phosphoserine. Residues 32–42 show a composition bias toward polar residues; the sequence is FVQNQPGQLQS. The BRO1 domain occupies 115 to 462; it reads PMIPLGLKET…LAKYSQLERE (348 aa). Positions 500–577 constitute a PDZ domain; it reads PVHMTRGEGS…EGVSLQVVSL (78 aa).

This sequence belongs to the RHPN family. As to quaternary structure, binds specifically to GTP-Rho. Interacts with ROPN1. Highly expressed in testis.

In terms of biological role, has no enzymatic activity. May serve as a target for Rho, and interact with some cytoskeletal component upon Rho binding or relay a Rho signal to other molecules. The polypeptide is Rhophilin-1 (Rhpn1) (Mus musculus (Mouse)).